The sequence spans 294 residues: Protoheme IX farnesyltransferase (294 aa).

Helical transmembrane passes span 24–44 (VVLLMLLTVIVGMYLAAPGWV), 48–68 (LIAFTLLGIGLCAGSAAAINH), 96–116 (ALWFAVIIGLMGLSLLILFVN), 118–138 (LTALLTFITLIGYAGVYTGYL), 145–165 (NIVIGGLAGAAPPLLGWTAVT), 172–192 (ALLLVLIIFTWTPPHFWALAI), 211–231 (GIQFTKLNIYLYTVLLLVVSL), 241–263 (WIYLLGALILGIRFLVWAHKLYF), and 268–288 (VVAMQTFRFSILYLMLLFVFL).

The protein belongs to the UbiA prenyltransferase family. Protoheme IX farnesyltransferase subfamily.

It localises to the cell inner membrane. It carries out the reaction heme b + (2E,6E)-farnesyl diphosphate + H2O = Fe(II)-heme o + diphosphate. The protein operates within porphyrin-containing compound metabolism; heme O biosynthesis; heme O from protoheme: step 1/1. Converts heme B (protoheme IX) to heme O by substitution of the vinyl group on carbon 2 of heme B porphyrin ring with a hydroxyethyl farnesyl side group. The sequence is that of Protoheme IX farnesyltransferase from Legionella pneumophila (strain Lens).